The primary structure comprises 90 residues: Acylphosphatase (90 aa).

The Acylphosphatase-like domain maps to R3–Y90. Catalysis depends on residues R18 and N36.

This sequence belongs to the acylphosphatase family.

It catalyses the reaction an acyl phosphate + H2O = a carboxylate + phosphate + H(+). The polypeptide is Acylphosphatase (acyP) (Clostridium beijerinckii (strain ATCC 51743 / NCIMB 8052) (Clostridium acetobutylicum)).